Here is a 305-residue protein sequence, read N- to C-terminus: N-acyl-aromatic-L-amino acid amidohydrolase (carboxylate-forming) (305 aa).

2 residues coordinate Zn(2+): H15 and E18. Substrate is bound by residues R57 and N64–R65. H108 provides a ligand contact to Zn(2+). Positions 171 and 281 each coordinate substrate.

This sequence belongs to the AspA/AstE family. Aspartoacylase subfamily. Homotetramer. The cofactor is Zn(2+).

It is found in the apical cell membrane. The protein resides in the cytoplasm. The enzyme catalyses an N-acyl-aromatic L-alpha-amino acid + H2O = an aromatic L-alpha-amino acid + a carboxylate. The catalysed reaction is an N-acetyl-L-cysteine-S-conjugate + H2O = an S-substituted L-cysteine + acetate. In terms of biological role, plays an important role in deacetylating mercapturic acids in kidney proximal tubules. This chain is N-acyl-aromatic-L-amino acid amidohydrolase (carboxylate-forming) (acy3), found in Xenopus laevis (African clawed frog).